Here is a 211-residue protein sequence, read N- to C-terminus: ATP phosphoribosyltransferase (211 aa).

Belongs to the ATP phosphoribosyltransferase family. Short subfamily. In terms of assembly, heteromultimer composed of HisG and HisZ subunits.

The protein localises to the cytoplasm. The enzyme catalyses 1-(5-phospho-beta-D-ribosyl)-ATP + diphosphate = 5-phospho-alpha-D-ribose 1-diphosphate + ATP. The protein operates within amino-acid biosynthesis; L-histidine biosynthesis; L-histidine from 5-phospho-alpha-D-ribose 1-diphosphate: step 1/9. Functionally, catalyzes the condensation of ATP and 5-phosphoribose 1-diphosphate to form N'-(5'-phosphoribosyl)-ATP (PR-ATP). Has a crucial role in the pathway because the rate of histidine biosynthesis seems to be controlled primarily by regulation of HisG enzymatic activity. In Bacillus mycoides (strain KBAB4) (Bacillus weihenstephanensis), this protein is ATP phosphoribosyltransferase.